The sequence spans 407 residues: Aurofusarin biosynthesis cluster protein S (407 aa).

The signal sequence occupies residues 1–35; that stretch reads MSKQKPSLWRALRALSFIISIPLLIQYLVLKWYST. N-linked (GlcNAc...) asparagine glycosylation is found at Asn-52, Asn-174, Asn-196, Asn-274, and Asn-312. FAS1 domains lie at 52-192 and 195-365; these read NLTV…DTVL and PNST…DSIL.

Might be part of an extracellular enzyme complex composed of GIP1, aurF, aurO and aurS.

Its subcellular location is the secreted. It localises to the extracellular space. The protein operates within pigment biosynthesis. In terms of biological role, part of the gene cluster that mediates the biosynthesis of aurofusarin, a red mycelium pigment which is acting as a mycotoxin. The first step is performed by the polyketide synthase which condenses one acetyl-CoA and 6 malonyl-CoA units to form the first intermediate, the cyclic heptaketide and yellow pigment YWA1. The C2 hydroxyl group in the pyrone ring of YWA1 is probably formed during ring closure by an aldol-type cyclization reaction. The dehydratase aurZ then acts as the first tailoring enzyme in the aurofusarin biosynthetic pathway by converting YWA1 to nor-rubrofusarin. Nor-rubrofusarin is then methylated to rubrofusarin by the O-methyltransferase aurJ. Rubrofusarin is then transported across the plasma membrane by the rubrofusarin-specific pump aurT for further enzymatic processing by the extracellular complex composed of GIP1, aurF, aurO and aurS to yield aurofusarin. This Gibberella zeae (strain ATCC MYA-4620 / CBS 123657 / FGSC 9075 / NRRL 31084 / PH-1) (Wheat head blight fungus) protein is Aurofusarin biosynthesis cluster protein S.